The primary structure comprises 269 residues: KDEIIDAGIDGKKGGGKKDTQDAGESNKGKEKDKDINAGSKGSGVPRLQKITKKMNLPMVKGSMVLDLDHLIEYKPDQTKLFNTRATDAQFATWYEGVKAEYELSDDQMGVIMNPFMVWCIENGTSPDINGVWVMMDGDEQVEYPLKPMVENAKPTLRQIMHHFSDAAEAYIEMRCASGPYMPRYGLLRNLRDKNLARYAFDFYEVNAKTSDRAREAVSGEKAAALSNVTNKLFGLDGNVATISEDTERHTARDVNQNMHTLLGMGAPQ.

The disordered stretch occupies residues 1-45 (KDEIIDAGIDGKKGGGKKDTQDAGESNKGKEKDKDINAGSKGSGV). Residues 9–36 (IDGKKGGGKKDTQDAGESNKGKEKDKDI) are compositionally biased toward basic and acidic residues.

This sequence belongs to the potyviridae genome polyprotein family. In terms of processing, genome polyprotein of potyviruses undergoes post-translational proteolytic processing by the main proteinase NIa-pro resulting in the production of at least ten individual proteins. The P1 proteinase and the HC-pro cleave only their respective C-termini autocatalytically. 6K1 is essential for proper proteolytic separation of P3 from CI.

It is found in the virion. Functionally, involved in aphid transmission, cell-to-cell and systemis movement, encapsidation of the viral RNA and in the regulation of viral RNA amplification. This is Genome polyprotein from Arachis hypogaea (Peanut).